We begin with the raw amino-acid sequence, 154 residues long: 3-hydroxyacyl-[acyl-carrier-protein] dehydratase FabZ (154 aa).

Residue His-54 is part of the active site.

It belongs to the thioester dehydratase family. FabZ subfamily.

It is found in the cytoplasm. The enzyme catalyses a (3R)-hydroxyacyl-[ACP] = a (2E)-enoyl-[ACP] + H2O. Its function is as follows. Involved in unsaturated fatty acids biosynthesis. Catalyzes the dehydration of short chain beta-hydroxyacyl-ACPs and long chain saturated and unsaturated beta-hydroxyacyl-ACPs. This chain is 3-hydroxyacyl-[acyl-carrier-protein] dehydratase FabZ, found in Chlamydia abortus (strain DSM 27085 / S26/3) (Chlamydophila abortus).